We begin with the raw amino-acid sequence, 441 residues long: UDP-N-acetylglucosamine--N-acetylmuramyl-(pentapeptide) pyrophosphoryl-undecaprenol N-acetylglucosamine transferase (441 aa).

Residues threonine 28–glycine 30, asparagine 140, arginine 176, serine 204, isoleucine 257, and glutamine 302 contribute to the UDP-N-acetyl-alpha-D-glucosamine site.

It belongs to the glycosyltransferase 28 family. MurG subfamily.

Its subcellular location is the cell inner membrane. The catalysed reaction is di-trans,octa-cis-undecaprenyl diphospho-N-acetyl-alpha-D-muramoyl-L-alanyl-D-glutamyl-meso-2,6-diaminopimeloyl-D-alanyl-D-alanine + UDP-N-acetyl-alpha-D-glucosamine = di-trans,octa-cis-undecaprenyl diphospho-[N-acetyl-alpha-D-glucosaminyl-(1-&gt;4)]-N-acetyl-alpha-D-muramoyl-L-alanyl-D-glutamyl-meso-2,6-diaminopimeloyl-D-alanyl-D-alanine + UDP + H(+). It participates in cell wall biogenesis; peptidoglycan biosynthesis. In terms of biological role, cell wall formation. Catalyzes the transfer of a GlcNAc subunit on undecaprenyl-pyrophosphoryl-MurNAc-pentapeptide (lipid intermediate I) to form undecaprenyl-pyrophosphoryl-MurNAc-(pentapeptide)GlcNAc (lipid intermediate II). The polypeptide is UDP-N-acetylglucosamine--N-acetylmuramyl-(pentapeptide) pyrophosphoryl-undecaprenol N-acetylglucosamine transferase (Xanthomonas oryzae pv. oryzae (strain KACC10331 / KXO85)).